We begin with the raw amino-acid sequence, 37 residues long: Large ribosomal subunit protein bL36 (37 aa).

It belongs to the bacterial ribosomal protein bL36 family.

This is Large ribosomal subunit protein bL36 from Synechococcus sp. (strain CC9311).